The following is a 222-amino-acid chain: Protein GrpE (222 aa).

Residues 1 to 82 (MSDFNKDEYL…KADDTLTPLG (82 aa)) form a disordered region. Low complexity predominate over residues 20 to 71 (SGQAAPAAASADSAAAAAGATQEGAAQPAAAQSQENGDSAAADGADKAGAAD).

Belongs to the GrpE family. As to quaternary structure, homodimer.

Its subcellular location is the cytoplasm. Participates actively in the response to hyperosmotic and heat shock by preventing the aggregation of stress-denatured proteins, in association with DnaK and GrpE. It is the nucleotide exchange factor for DnaK and may function as a thermosensor. Unfolded proteins bind initially to DnaJ; upon interaction with the DnaJ-bound protein, DnaK hydrolyzes its bound ATP, resulting in the formation of a stable complex. GrpE releases ADP from DnaK; ATP binding to DnaK triggers the release of the substrate protein, thus completing the reaction cycle. Several rounds of ATP-dependent interactions between DnaJ, DnaK and GrpE are required for fully efficient folding. In Bifidobacterium adolescentis (strain ATCC 15703 / DSM 20083 / NCTC 11814 / E194a), this protein is Protein GrpE.